The primary structure comprises 255 residues: Triosephosphate isomerase (255 aa).

Substrate is bound at residue 9–11 (NWK). His-95 functions as the Electrophile in the catalytic mechanism. The Proton acceptor role is filled by Glu-167. Residues Gly-173, Ser-212, and 233 to 234 (GG) contribute to the substrate site.

This sequence belongs to the triosephosphate isomerase family. Homodimer.

Its subcellular location is the cytoplasm. It carries out the reaction D-glyceraldehyde 3-phosphate = dihydroxyacetone phosphate. It participates in carbohydrate biosynthesis; gluconeogenesis. It functions in the pathway carbohydrate degradation; glycolysis; D-glyceraldehyde 3-phosphate from glycerone phosphate: step 1/1. In terms of biological role, involved in the gluconeogenesis. Catalyzes stereospecifically the conversion of dihydroxyacetone phosphate (DHAP) to D-glyceraldehyde-3-phosphate (G3P). The sequence is that of Triosephosphate isomerase from Photorhabdus laumondii subsp. laumondii (strain DSM 15139 / CIP 105565 / TT01) (Photorhabdus luminescens subsp. laumondii).